Here is a 126-residue protein sequence, read N- to C-terminus: Small ribosomal subunit protein uS11 (126 aa).

This sequence belongs to the universal ribosomal protein uS11 family. Part of the 30S ribosomal subunit. Interacts with proteins S7 and S18. Binds to IF-3.

Functionally, located on the platform of the 30S subunit, it bridges several disparate RNA helices of the 16S rRNA. Forms part of the Shine-Dalgarno cleft in the 70S ribosome. In Ehrlichia chaffeensis (strain ATCC CRL-10679 / Arkansas), this protein is Small ribosomal subunit protein uS11.